We begin with the raw amino-acid sequence, 346 residues long: MGAMRIATLTSGGDCPGLNAVIRGIVRTASNEFGSTVVGYQDGWEGLLADRRVQLYDDEDIDRILLRGGTILGTGRLHPDKFRAGIDQVKANLADAGIDALIPIGGEGTLKGAKWLADNGIPVVGVPKTIDNDVNGTDFTFGFDSAVSVATDAIDRLHTTAESHNRVMIVEVMGRHVGWIALHAGMAGGAHYTVIPEVPFDISEICKRMERRFQMGEKYGIIVVAEGALPKEGTMELREGEVDQFGHKTFTGIGQQIADEVHRRLGHDVRTTVLGHIQRGGTPTAFDRVLATRYGVRAARACHEGQFNTVVALKGERIRMISFDEAVGTLKKVPMERWVTAQAMFG.

ATP contacts are provided by residues glycine 13, 76–77 (RL), and 106–109 (GEGT). Glutamate 107 contacts Mg(2+). Substrate-binding positions include 129–131 (TID), arginine 166, 173–175 (MGR), glutamate 226, arginine 270, and 276–279 (HIQR). The Proton acceptor role is filled by aspartate 131.

The protein belongs to the phosphofructokinase type A (PFKA) family. Mixed-substrate PFK group III subfamily. As to quaternary structure, homodimer or homotetramer. Mg(2+) serves as cofactor.

It localises to the cytoplasm. The enzyme catalyses beta-D-fructose 6-phosphate + ATP = beta-D-fructose 1,6-bisphosphate + ADP + H(+). It participates in carbohydrate degradation; glycolysis; D-glyceraldehyde 3-phosphate and glycerone phosphate from D-glucose: step 3/4. Its function is as follows. Catalyzes the phosphorylation of D-fructose 6-phosphate to fructose 1,6-bisphosphate by ATP, the first committing step of glycolysis. In Corynebacterium efficiens (strain DSM 44549 / YS-314 / AJ 12310 / JCM 11189 / NBRC 100395), this protein is ATP-dependent 6-phosphofructokinase.